Consider the following 428-residue polypeptide: Enolase (428 aa).

Gln-163 is a binding site for (2R)-2-phosphoglycerate. Glu-205 functions as the Proton donor in the catalytic mechanism. Residues Asp-242, Glu-286, and Asp-313 each contribute to the Mg(2+) site. Positions 338, 367, 368, and 389 each coordinate (2R)-2-phosphoglycerate. Lys-338 (proton acceptor) is an active-site residue.

Belongs to the enolase family. The cofactor is Mg(2+).

It localises to the cytoplasm. Its subcellular location is the secreted. The protein localises to the cell surface. The catalysed reaction is (2R)-2-phosphoglycerate = phosphoenolpyruvate + H2O. The protein operates within carbohydrate degradation; glycolysis; pyruvate from D-glyceraldehyde 3-phosphate: step 4/5. In terms of biological role, catalyzes the reversible conversion of 2-phosphoglycerate (2-PG) into phosphoenolpyruvate (PEP). It is essential for the degradation of carbohydrates via glycolysis. The protein is Enolase of Acidovorax sp. (strain JS42).